The primary structure comprises 165 residues: Large ribosomal subunit protein bL17 (165 aa).

The span at 138 to 158 (QEKREAQEKAREEKRTARKSD) shows a compositional bias: basic and acidic residues. The disordered stretch occupies residues 138 to 165 (QEKREAQEKAREEKRTARKSDSVPARKK).

This sequence belongs to the bacterial ribosomal protein bL17 family. As to quaternary structure, part of the 50S ribosomal subunit. Contacts protein L32.

The sequence is that of Large ribosomal subunit protein bL17 from Leptospira borgpetersenii serovar Hardjo-bovis (strain JB197).